The chain runs to 284 residues: D-tagatose-1,6-bisphosphate aldolase subunit GatY (284 aa).

D82 (proton donor) is an active-site residue. Residues H83 and H180 each coordinate Zn(2+). Residue C181 coordinates dihydroxyacetone phosphate. Zn(2+) is bound at residue H208. Dihydroxyacetone phosphate is bound by residues 209 to 211 (GAS) and 230 to 233 (NVAT).

The protein belongs to the class II fructose-bisphosphate aldolase family. TagBP aldolase GatY subfamily. Forms a complex with GatZ. Zn(2+) is required as a cofactor.

It catalyses the reaction D-tagatofuranose 1,6-bisphosphate = D-glyceraldehyde 3-phosphate + dihydroxyacetone phosphate. Its pathway is carbohydrate metabolism; D-tagatose 6-phosphate degradation; D-glyceraldehyde 3-phosphate and glycerone phosphate from D-tagatose 6-phosphate: step 2/2. Its function is as follows. Catalytic subunit of the tagatose-1,6-bisphosphate aldolase GatYZ, which catalyzes the reversible aldol condensation of dihydroxyacetone phosphate (DHAP or glycerone-phosphate) with glyceraldehyde 3-phosphate (G3P) to produce tagatose 1,6-bisphosphate (TBP). Requires GatZ subunit for full activity and stability. Is involved in the catabolism of galactitol. The polypeptide is D-tagatose-1,6-bisphosphate aldolase subunit GatY (Salmonella paratyphi A (strain ATCC 9150 / SARB42)).